The following is a 71-amino-acid chain: General transcription factor IIH subunit 5 (71 aa).

The residue at position 69 (T69) is a Phosphothreonine.

It belongs to the TFB5 family. As to quaternary structure, component of the 7-subunit TFIIH core complex composed of XPB/ERCC3, XPD/ERCC2, GTF2H1, GTF2H2, GTF2H3, GTF2H4 and GTF2H5, which is active in NER. The core complex associates with the 3-subunit CDK-activating kinase (CAK) module composed of CCNH/cyclin H, CDK7 and MNAT1 to form the 10-subunit holoenzyme (holo-TFIIH) active in transcription. Part of TBP-based Pol II pre-initiation complex (PIC), in which Pol II core assembles with general transcription factors and other specific initiation factors including GTF2E1, GTF2E2, GTF2F1, GTF2F2, TCEA1, ERCC2, ERCC3, GTF2H2, GTF2H3, GTF2H4, GTF2H5, GTF2A1, GTF2A2, GTF2B and TBP; this large multi-subunit PIC complex mediates DNA unwinding and targets Pol II core to the transcription start site where the first phosphodiester bond forms.

It localises to the nucleus. The protein resides in the cytoplasm. Its function is as follows. Component of the general transcription and DNA repair factor IIH (TFIIH) core complex, which is involved in general and transcription-coupled nucleotide excision repair (NER) of damaged DNA and, when complexed to CAK, in RNA transcription by RNA polymerase II. In NER, TFIIH acts by opening DNA around the lesion to allow the excision of the damaged oligonucleotide and its replacement by a new DNA fragment. In transcription, TFIIH has an essential role in transcription initiation. When the pre-initiation complex (PIC) has been established, TFIIH is required for promoter opening and promoter escape. Phosphorylation of the C-terminal tail (CTD) of the largest subunit of RNA polymerase II by the kinase module CAK controls the initiation of transcription. Necessary for the stability of the TFIIH complex and for the presence of normal levels of TFIIH in the cell. This is General transcription factor IIH subunit 5 from Homo sapiens (Human).